We begin with the raw amino-acid sequence, 124 residues long: Large ribosomal subunit protein bL17 (124 aa).

It belongs to the bacterial ribosomal protein bL17 family. Part of the 50S ribosomal subunit. Contacts protein L32.

The protein is Large ribosomal subunit protein bL17 of Mycoplasma pneumoniae (strain ATCC 29342 / M129 / Subtype 1) (Mycoplasmoides pneumoniae).